The primary structure comprises 1322 residues: Phosphoribosylformylglycinamidine synthase (1322 aa).

Residues 300-311 (GASTGAGGEIRD) and A702 contribute to the ATP site. D703, E742, N746, and D915 together coordinate Mg(2+). S917 is an ATP binding site. The region spanning 1073 to 1322 (VAILREQGIN…LFRNARAWVG (250 aa)) is the Glutamine amidotransferase type-1 domain. C1166 (nucleophile) is an active-site residue. Active-site residues include H1287 and E1289.

It in the N-terminal section; belongs to the FGAMS family. In terms of assembly, monomer.

Its subcellular location is the cytoplasm. It carries out the reaction N(2)-formyl-N(1)-(5-phospho-beta-D-ribosyl)glycinamide + L-glutamine + ATP + H2O = 2-formamido-N(1)-(5-O-phospho-beta-D-ribosyl)acetamidine + L-glutamate + ADP + phosphate + H(+). The protein operates within purine metabolism; IMP biosynthesis via de novo pathway; 5-amino-1-(5-phospho-D-ribosyl)imidazole from N(2)-formyl-N(1)-(5-phospho-D-ribosyl)glycinamide: step 1/2. In terms of biological role, phosphoribosylformylglycinamidine synthase involved in the purines biosynthetic pathway. Catalyzes the ATP-dependent conversion of formylglycinamide ribonucleotide (FGAR) and glutamine to yield formylglycinamidine ribonucleotide (FGAM) and glutamate. This Xylella fastidiosa (strain Temecula1 / ATCC 700964) protein is Phosphoribosylformylglycinamidine synthase.